The chain runs to 445 residues: Putative ubiquitin carboxyl-terminal hydrolase L293 (445 aa).

Positions 133 to 441 (KALANFGNSC…SAYIILYGDI (309 aa)) constitute a USP domain. Residue C142 is the Nucleophile of the active site. H384 serves as the catalytic Proton acceptor.

Belongs to the peptidase C19 family.

The protein resides in the virion. The enzyme catalyses Thiol-dependent hydrolysis of ester, thioester, amide, peptide and isopeptide bonds formed by the C-terminal Gly of ubiquitin (a 76-residue protein attached to proteins as an intracellular targeting signal).. The chain is Putative ubiquitin carboxyl-terminal hydrolase L293 from Acanthamoeba polyphaga mimivirus (APMV).